A 522-amino-acid chain; its full sequence is Solute carrier family 2, facilitated glucose transporter member 2 (522 aa).

Residues 1-10 lie on the Cytoplasmic side of the membrane; the sequence is MSEDKITGTL. Residues 11 to 31 form a helical membrane-spanning segment; that stretch reads AFTVFTAVLGSFQFGYDIGVI. Topologically, residues 32–96 are extracellular; the sequence is NAPQEVIISH…SAHIVTMLWS (65 aa). Asparagine 62 is a glycosylation site (N-linked (GlcNAc...) asparagine). Residues 97–117 traverse the membrane as a helical segment; sequence LSVSSFAVGGMVASFFGGWLG. Topologically, residues 118 to 125 are cytoplasmic; that stretch reads DKLGRIKA. A helical membrane pass occupies residues 126–146; the sequence is MLAANSLSLTGALLMGCSKFG. Topologically, residues 147–156 are extracellular; the sequence is PAHALIIAGR. A helical membrane pass occupies residues 157–177; that stretch reads SVSGLYCGLISGLVPMYIGEI. The Cytoplasmic segment spans residues 178-185; sequence APTTLRGA. Residues 186-206 form a helical membrane-spanning segment; sequence LGTLHQLALVTGILISQIAGL. Glutamine 191 provides a ligand contact to D-glucose. At 207–215 the chain is on the extracellular side; sequence SFILGNQDY. A helical transmembrane segment spans residues 216–236; the sequence is WHILLGLSAVPALLQCLLLLF. The Cytoplasmic portion of the chain corresponds to 237-301; it reads CPESPRYLYL…LFTDPNYRQP (65 aa). The chain crosses the membrane as a helical span at residues 302–322; sequence IVVALMLHLAQQFSGINGIFY. Residues 312-313 and asparagine 318 each bind D-glucose; that span reads QQ. Topologically, residues 323–337 are extracellular; the sequence is YSTSIFQTAGISQPV. Residues 338–358 form a helical membrane-spanning segment; that stretch reads YATIGVGAINMIFTAVSVLLV. Asparagine 347 contacts D-glucose. Residues 359 to 365 lie on the Cytoplasmic side of the membrane; the sequence is EKAGRRT. A helical membrane pass occupies residues 366 to 386; it reads LFLAGMIGMFFCAVFMSLGLV. The Extracellular portion of the chain corresponds to 387–401; sequence LLDKFTWMSYVSMTA. The chain crosses the membrane as a helical span at residues 402–422; sequence IFLFVSFFEIGPGPIPWFMVA. 2 residues coordinate D-glucose: glutamate 410 and tryptophan 418. The Cytoplasmic segment spans residues 423–431; the sequence is EFFSQGPRP. The helical transmembrane segment at 432–452 threads the bilayer; sequence TALALAAFSNWVCNFIIALCF. The Extracellular portion of the chain corresponds to 453–459; that stretch reads QYIADFL. A helical transmembrane segment spans residues 460–480; it reads GPYVFFLFAGVVLVFTLFTFF. Topologically, residues 481–522 are cytoplasmic; the sequence is KVPETKGKSFDEIAAEFRKKSGSAPPRKATVQMEFLGSSETV. Threonine 521 carries the phosphothreonine modification.

It belongs to the major facilitator superfamily. Sugar transporter (TC 2.A.1.1) family. Glucose transporter subfamily. Post-translationally, N-glycosylated; required for stability and retention at the cell surface of pancreatic beta cells. In terms of tissue distribution, present in liver, intestine, kidney and beta-pancreatic islet cells.

Its subcellular location is the cell membrane. The enzyme catalyses D-glucose(out) = D-glucose(in). The catalysed reaction is D-fructose(out) = D-fructose(in). It carries out the reaction L-dehydroascorbate(out) = L-dehydroascorbate(in). It catalyses the reaction D-galactose(in) = D-galactose(out). With respect to regulation, D-glucose and maltose competitively inhibit fructose transport. D-glucose, D-fructose and maltose inhibit deoxyglucose transport. In terms of biological role, facilitative hexose transporter that mediates the transport of glucose, fructose and galactose. Likely mediates the bidirectional transfer of glucose across the plasma membrane of hepatocytes and is responsible for uptake of glucose by the beta cells; may comprise part of the glucose-sensing mechanism of the beta cell. May also participate with the Na(+)/glucose cotransporter in the transcellular transport of glucose in the small intestine and kidney. Also able to mediate the transport of dehydroascorbate. This chain is Solute carrier family 2, facilitated glucose transporter member 2, found in Rattus norvegicus (Rat).